Reading from the N-terminus, the 185-residue chain is Elongation factor P (185 aa).

It belongs to the elongation factor P family.

The protein localises to the cytoplasm. Its pathway is protein biosynthesis; polypeptide chain elongation. Functionally, involved in peptide bond synthesis. Stimulates efficient translation and peptide-bond synthesis on native or reconstituted 70S ribosomes in vitro. Probably functions indirectly by altering the affinity of the ribosome for aminoacyl-tRNA, thus increasing their reactivity as acceptors for peptidyl transferase. In Lactococcus lactis subsp. lactis (strain IL1403) (Streptococcus lactis), this protein is Elongation factor P (efp).